Consider the following 165-residue polypeptide: Putative inactive neutral ceramidase B (165 aa).

Belongs to the neutral ceramidase family. In terms of tissue distribution, ubiquitous. Expression is reduced with increasing age and in late-onset Alzheimer disease (LOAD) patients. This reduction is even more pronounced in patients with an affected mother.

In Homo sapiens (Human), this protein is Putative inactive neutral ceramidase B.